A 227-amino-acid polypeptide reads, in one-letter code: Orotidine 5'-phosphate decarboxylase (227 aa).

Residues aspartate 8, lysine 30, 59 to 68, threonine 118, arginine 178, glutamine 187, glycine 207, and arginine 208 contribute to the substrate site; that span reads DLKLYDIPNT. Lysine 61 acts as the Proton donor in catalysis.

It belongs to the OMP decarboxylase family. Type 1 subfamily. As to quaternary structure, homodimer.

It catalyses the reaction orotidine 5'-phosphate + H(+) = UMP + CO2. It functions in the pathway pyrimidine metabolism; UMP biosynthesis via de novo pathway; UMP from orotate: step 2/2. Catalyzes the decarboxylation of orotidine 5'-monophosphate (OMP) to uridine 5'-monophosphate (UMP). This is Orotidine 5'-phosphate decarboxylase from Nitratiruptor sp. (strain SB155-2).